Reading from the N-terminus, the 347-residue chain is Phospho-N-acetylmuramoyl-pentapeptide-transferase (347 aa).

10 consecutive transmembrane segments (helical) span residues 10–30 (SLVF…IFLG), 67–87 (AGGI…LPLG), 91–111 (TWLF…DDIV), 127–147 (FVLQ…IYKG), 164–184 (LGHS…AIVG), 195–215 (LDGL…VVAV), 220–240 (IPLA…SLAF), 250–270 (VFMG…CAVM), 275–295 (LLLI…ILQI), and 325–345 (VVKR…IAAL).

The protein belongs to the glycosyltransferase 4 family. MraY subfamily. The cofactor is Mg(2+).

Its subcellular location is the cell inner membrane. The enzyme catalyses UDP-N-acetyl-alpha-D-muramoyl-L-alanyl-gamma-D-glutamyl-meso-2,6-diaminopimeloyl-D-alanyl-D-alanine + di-trans,octa-cis-undecaprenyl phosphate = di-trans,octa-cis-undecaprenyl diphospho-N-acetyl-alpha-D-muramoyl-L-alanyl-D-glutamyl-meso-2,6-diaminopimeloyl-D-alanyl-D-alanine + UMP. It functions in the pathway cell wall biogenesis; peptidoglycan biosynthesis. Functionally, catalyzes the initial step of the lipid cycle reactions in the biosynthesis of the cell wall peptidoglycan: transfers peptidoglycan precursor phospho-MurNAc-pentapeptide from UDP-MurNAc-pentapeptide onto the lipid carrier undecaprenyl phosphate, yielding undecaprenyl-pyrophosphoryl-MurNAc-pentapeptide, known as lipid I. This Chlamydia abortus (strain DSM 27085 / S26/3) (Chlamydophila abortus) protein is Phospho-N-acetylmuramoyl-pentapeptide-transferase.